The sequence spans 485 residues: Zinc finger protein 577 (485 aa).

The disordered stretch occupies residues 1–21 (MKNATIVMSVRREQGSSSGEG). In terms of domain architecture, KRAB spans 23 to 94 (LSFEDVAVGF…EGAAHSQICP (72 aa)). The segment at 158 to 180 (HECSVCGRAFSRKAQLIQHQRTE) adopts a C2H2-type 1; degenerate zinc-finger fold. C2H2-type zinc fingers lie at residues 186 to 208 (HGCG…QRTH), 214 to 236 (HECS…QRTH), 242 to 264 (YRCS…QRSH), 270 to 292 (YGCS…QRLH), 298 to 320 (YKCS…QRIH), 326 to 348 (YECS…QRTH), and 354 to 376 (YSCR…EKTH).

The protein belongs to the krueppel C2H2-type zinc-finger protein family.

Its subcellular location is the nucleus. Its function is as follows. May be involved in transcriptional regulation. The chain is Zinc finger protein 577 (ZNF577) from Homo sapiens (Human).